The primary structure comprises 190 residues: Endoribonuclease YbeY (190 aa).

Positions 1 to 20 (MDVENDRPPRRGAAGERNSG) are disordered. 3 residues coordinate Zn(2+): His147, His151, and His157.

It belongs to the endoribonuclease YbeY family. The cofactor is Zn(2+).

The protein resides in the cytoplasm. Functionally, single strand-specific metallo-endoribonuclease involved in late-stage 70S ribosome quality control and in maturation of the 3' terminus of the 16S rRNA. The chain is Endoribonuclease YbeY from Nitrobacter hamburgensis (strain DSM 10229 / NCIMB 13809 / X14).